A 397-amino-acid polypeptide reads, in one-letter code: S-adenosylmethionine synthase (397 aa).

H16 is an ATP binding site. Position 18 (D18) interacts with Mg(2+). A K(+)-binding site is contributed by E44. L-methionine-binding residues include E57 and Q100. The segment at 100 to 110 (QSPDIAQGVNE) is flexible loop. ATP contacts are provided by residues 175–177 (DAK), 242–243 (RF), D251, 257–258 (RK), A274, and K278. D251 contacts L-methionine. K282 contacts L-methionine.

The protein belongs to the AdoMet synthase family. Homotetramer; dimer of dimers. It depends on Mg(2+) as a cofactor. K(+) is required as a cofactor.

The protein resides in the cytoplasm. It catalyses the reaction L-methionine + ATP + H2O = S-adenosyl-L-methionine + phosphate + diphosphate. It functions in the pathway amino-acid biosynthesis; S-adenosyl-L-methionine biosynthesis; S-adenosyl-L-methionine from L-methionine: step 1/1. Catalyzes the formation of S-adenosylmethionine (AdoMet) from methionine and ATP. The overall synthetic reaction is composed of two sequential steps, AdoMet formation and the subsequent tripolyphosphate hydrolysis which occurs prior to release of AdoMet from the enzyme. This chain is S-adenosylmethionine synthase, found in Streptococcus thermophilus (strain CNRZ 1066).